The primary structure comprises 461 residues: Asparagine--tRNA ligase (461 aa).

This sequence belongs to the class-II aminoacyl-tRNA synthetase family. In terms of assembly, homodimer.

Its subcellular location is the cytoplasm. The catalysed reaction is tRNA(Asn) + L-asparagine + ATP = L-asparaginyl-tRNA(Asn) + AMP + diphosphate + H(+). The chain is Asparagine--tRNA ligase from Solibacter usitatus (strain Ellin6076).